The following is a 378-amino-acid chain: Mating-type protein MAT-1 (378 aa).

A DNA-binding region (alpha box) is located at residues 60 to 117 (KAKKALNAFVGFRCYYIAIPAFKPWPMKKLSNLISLLWEGDPNKSLWSLMAKAWSNIR). The interval 235–256 (SQVDQARVAARNRRRAKRQSAR) is disordered. The span at 244 to 253 (ARNRRRAKRQ) shows a compositional bias: basic residues.

It belongs to the MATALPHA1 family.

It localises to the nucleus. Its function is as follows. Mating type proteins are sequence specific DNA-binding proteins that act as master switches in fungal differentiation by controlling gene expression in a cell type-specific fashion. Transcriptional activator that induces the transcription of alpha-specific genes. The polypeptide is Mating-type protein MAT-1 (MAT1) (Cochliobolus ellisii (Curvularia ellisii)).